The following is a 1091-amino-acid chain: ATP-dependent helicase/deoxyribonuclease subunit B (1091 aa).

The protein belongs to the helicase family. AddB/RexB type 2 subfamily. In terms of assembly, heterodimer of AddA and RexB. Requires Mg(2+) as cofactor.

Functionally, the heterodimer acts as both an ATP-dependent DNA helicase and an ATP-dependent, dual-direction single-stranded exonuclease. Recognizes the chi site generating a DNA molecule suitable for the initiation of homologous recombination. This subunit has 5' -&gt; 3' nuclease activity but not helicase activity. This chain is ATP-dependent helicase/deoxyribonuclease subunit B, found in Streptococcus pneumoniae serotype 19F (strain G54).